We begin with the raw amino-acid sequence, 269 residues long: Shikimate dehydrogenase (NADP(+)) (269 aa).

Shikimate-binding positions include 15–17 and threonine 62; that span reads SLS. The Proton acceptor role is filled by lysine 66. Shikimate is bound by residues asparagine 86 and aspartate 100. NADP(+) is bound by residues 124 to 128, 147 to 152, and isoleucine 211; these read GAGGA and NRTPER. Shikimate is bound at residue tyrosine 213. Residue glycine 234 participates in NADP(+) binding.

It belongs to the shikimate dehydrogenase family. In terms of assembly, homodimer.

The enzyme catalyses shikimate + NADP(+) = 3-dehydroshikimate + NADPH + H(+). The protein operates within metabolic intermediate biosynthesis; chorismate biosynthesis; chorismate from D-erythrose 4-phosphate and phosphoenolpyruvate: step 4/7. Involved in the biosynthesis of the chorismate, which leads to the biosynthesis of aromatic amino acids. Catalyzes the reversible NADPH linked reduction of 3-dehydroshikimate (DHSA) to yield shikimate (SA). The protein is Shikimate dehydrogenase (NADP(+)) of Methanococcoides burtonii (strain DSM 6242 / NBRC 107633 / OCM 468 / ACE-M).